The sequence spans 487 residues: Glycogen synthase (487 aa).

Lysine 23 contacts ADP-alpha-D-glucose.

It belongs to the glycosyltransferase 1 family. Bacterial/plant glycogen synthase subfamily.

The catalysed reaction is [(1-&gt;4)-alpha-D-glucosyl](n) + ADP-alpha-D-glucose = [(1-&gt;4)-alpha-D-glucosyl](n+1) + ADP + H(+). It participates in glycan biosynthesis; glycogen biosynthesis. Synthesizes alpha-1,4-glucan chains using ADP-glucose. This chain is Glycogen synthase, found in Pseudomonas fluorescens (strain Pf0-1).